Reading from the N-terminus, the 147-residue chain is Deoxyuridine 5'-triphosphate nucleotidohydrolase (147 aa).

Residues 67 to 69, Asn-80, and 84 to 86 each bind substrate; these read RSG and TID.

This sequence belongs to the dUTPase family. Mg(2+) serves as cofactor.

The catalysed reaction is dUTP + H2O = dUMP + diphosphate + H(+). The protein operates within pyrimidine metabolism; dUMP biosynthesis; dUMP from dCTP (dUTP route): step 2/2. Its function is as follows. This enzyme is involved in nucleotide metabolism: it produces dUMP, the immediate precursor of thymidine nucleotides and it decreases the intracellular concentration of dUTP so that uracil cannot be incorporated into DNA. The sequence is that of Deoxyuridine 5'-triphosphate nucleotidohydrolase from Anaeromyxobacter dehalogenans (strain 2CP-C).